We begin with the raw amino-acid sequence, 156 residues long: Endoribonuclease YbeY (156 aa).

Residues His-122, His-126, and His-132 each coordinate Zn(2+).

The protein belongs to the endoribonuclease YbeY family. Zn(2+) serves as cofactor.

The protein resides in the cytoplasm. Single strand-specific metallo-endoribonuclease involved in late-stage 70S ribosome quality control and in maturation of the 3' terminus of the 16S rRNA. The chain is Endoribonuclease YbeY from Bacillus cereus (strain ATCC 14579 / DSM 31 / CCUG 7414 / JCM 2152 / NBRC 15305 / NCIMB 9373 / NCTC 2599 / NRRL B-3711).